A 347-amino-acid chain; its full sequence is SCA7 domain-containing protein SELMODRAFT_439258 (347 aa).

A signal peptide spans 1–13 (MCFFLSSLCPVVA). The segment at 77–106 (RAEVGGTGPKVGRPRKLSVYNPREMSDGNP) is disordered. One can recognise an SCA7 domain in the interval 134–201 (QHLPFTVDDL…NNSRKSQQAD (68 aa)).

The chain is SCA7 domain-containing protein SELMODRAFT_439258 from Selaginella moellendorffii (Spikemoss).